The sequence spans 387 residues: Succinyl-diaminopimelate desuccinylase (387 aa).

Zn(2+) is bound at residue His74. Asp76 is a catalytic residue. Asp107 is a Zn(2+) binding site. Glu142 serves as the catalytic Proton acceptor. The Zn(2+) site is built by Glu143, Glu171, and His360.

It belongs to the peptidase M20A family. DapE subfamily. As to quaternary structure, homodimer. The cofactor is Zn(2+). Co(2+) serves as cofactor.

The enzyme catalyses N-succinyl-(2S,6S)-2,6-diaminopimelate + H2O = (2S,6S)-2,6-diaminopimelate + succinate. The protein operates within amino-acid biosynthesis; L-lysine biosynthesis via DAP pathway; LL-2,6-diaminopimelate from (S)-tetrahydrodipicolinate (succinylase route): step 3/3. Catalyzes the hydrolysis of N-succinyl-L,L-diaminopimelic acid (SDAP), forming succinate and LL-2,6-diaminopimelate (DAP), an intermediate involved in the bacterial biosynthesis of lysine and meso-diaminopimelic acid, an essential component of bacterial cell walls. The polypeptide is Succinyl-diaminopimelate desuccinylase (Rhodopseudomonas palustris (strain ATCC BAA-98 / CGA009)).